The primary structure comprises 1098 residues: Eukaryotic translation initiation factor 3 subunit A (1098 aa).

The region spanning 324–503 (AQEQATRVLL…DCVRFGSSDA (180 aa)) is the PCI domain. The stretch at 574–844 (TEIERIHRRK…ARQAVIDSQR (271 aa)) forms a coiled coil. Disordered stretches follow at residues 599-648 (EKAA…KIKR) and 805-1098 (RAEK…NWRR). Basic and acidic residues-rich tracts occupy residues 608-648 (QAKR…KIKR), 805-857 (RAEK…REME), and 877-895 (MPQREPRPMRDGPPREPFR). The segment covering 905 to 914 (DSSWRSSAQP) has biased composition (polar residues). 2 stretches are compositionally biased toward basic and acidic residues: residues 916 to 978 (RKPD…ERGA) and 1054 to 1079 (LPPRDLPPRDGPRDIPRRDGPRRDGP). Residues 1080-1098 (NRNSGANNAGNADSANWRR) show a composition bias toward low complexity.

It belongs to the eIF-3 subunit A family. Component of the eukaryotic translation initiation factor 3 (eIF-3) complex.

It is found in the cytoplasm. Its function is as follows. RNA-binding component of the eukaryotic translation initiation factor 3 (eIF-3) complex, which is involved in protein synthesis of a specialized repertoire of mRNAs and, together with other initiation factors, stimulates binding of mRNA and methionyl-tRNAi to the 40S ribosome. The eIF-3 complex specifically targets and initiates translation of a subset of mRNAs involved in cell proliferation. This Caenorhabditis briggsae protein is Eukaryotic translation initiation factor 3 subunit A.